Here is a 154-residue protein sequence, read N- to C-terminus: SsrA-binding protein (154 aa).

This sequence belongs to the SmpB family.

It is found in the cytoplasm. Required for rescue of stalled ribosomes mediated by trans-translation. Binds to transfer-messenger RNA (tmRNA), required for stable association of tmRNA with ribosomes. tmRNA and SmpB together mimic tRNA shape, replacing the anticodon stem-loop with SmpB. tmRNA is encoded by the ssrA gene; the 2 termini fold to resemble tRNA(Ala) and it encodes a 'tag peptide', a short internal open reading frame. During trans-translation Ala-aminoacylated tmRNA acts like a tRNA, entering the A-site of stalled ribosomes, displacing the stalled mRNA. The ribosome then switches to translate the ORF on the tmRNA; the nascent peptide is terminated with the 'tag peptide' encoded by the tmRNA and targeted for degradation. The ribosome is freed to recommence translation, which seems to be the essential function of trans-translation. The polypeptide is SsrA-binding protein (Solidesulfovibrio magneticus (strain ATCC 700980 / DSM 13731 / RS-1) (Desulfovibrio magneticus)).